Consider the following 170-residue polypeptide: MSTQTEAEMSIAGIIRKHAKDISAPPEVFDKISIQIIICDGGEKIMVVKVPRSILHGVQMNYSNIIKAAKQQFHDYYIMFVRNFEAEGGGKTMTKRKAKEVEEVWLANACFPFLLTGTRTDVRGVDDMVVNVLLERRTSLSRAEMDAIGAALHGLLGKNYIVDVNHHTKN.

The protein belongs to the eukaryotic ribosomal protein eS7 family. In terms of assembly, component of the small ribosomal subunit.

It localises to the cytoplasm. The sequence is that of Small ribosomal subunit protein eS7 (RPS7) from Encephalitozoon cuniculi (strain GB-M1) (Microsporidian parasite).